Reading from the N-terminus, the 203-residue chain is Arcadin-2 (203 aa).

As to quaternary structure, interacts with crenactin.

The protein resides in the cytoplasm. It localises to the cytoskeleton. Functionally, part of an actin-like archaeal cytoskeleton. Prevents polymerization of crenactin filaments by binding its C-terminus into crenactin's hydrophobic groove. May act by competing with the D-loop of the following crenactin subunit for the hydrophobic groove. The protein is Arcadin-2 of Pyrobaculum calidifontis (strain DSM 21063 / JCM 11548 / VA1).